A 341-amino-acid chain; its full sequence is Glycerol-3-phosphate dehydrogenase [NAD(P)+] (341 aa).

Positions 15, 16, 36, and 110 each coordinate NADPH. Lysine 110, glycine 139, and serine 141 together coordinate sn-glycerol 3-phosphate. An NADPH-binding site is contributed by alanine 143. Sn-glycerol 3-phosphate contacts are provided by lysine 194, aspartate 247, serine 257, arginine 258, and asparagine 259. The active-site Proton acceptor is the lysine 194. Arginine 258 is a binding site for NADPH. The NADPH site is built by valine 282 and glutamate 284.

This sequence belongs to the NAD-dependent glycerol-3-phosphate dehydrogenase family.

It localises to the cytoplasm. It carries out the reaction sn-glycerol 3-phosphate + NAD(+) = dihydroxyacetone phosphate + NADH + H(+). It catalyses the reaction sn-glycerol 3-phosphate + NADP(+) = dihydroxyacetone phosphate + NADPH + H(+). The protein operates within membrane lipid metabolism; glycerophospholipid metabolism. Its function is as follows. Catalyzes the reduction of the glycolytic intermediate dihydroxyacetone phosphate (DHAP) to sn-glycerol 3-phosphate (G3P), the key precursor for phospholipid synthesis. The chain is Glycerol-3-phosphate dehydrogenase [NAD(P)+] from Stenotrophomonas maltophilia (strain R551-3).